The chain runs to 429 residues: Enolase (429 aa).

Gln163 contributes to the (2R)-2-phosphoglycerate binding site. The Proton donor role is filled by Glu205. Positions 242, 285, and 312 each coordinate Mg(2+). (2R)-2-phosphoglycerate is bound by residues Lys337, Arg366, Ser367, and Lys388. Lys337 functions as the Proton acceptor in the catalytic mechanism.

The protein belongs to the enolase family. The cofactor is Mg(2+).

It localises to the cytoplasm. The protein localises to the secreted. Its subcellular location is the cell surface. The catalysed reaction is (2R)-2-phosphoglycerate = phosphoenolpyruvate + H2O. The protein operates within carbohydrate degradation; glycolysis; pyruvate from D-glyceraldehyde 3-phosphate: step 4/5. Its function is as follows. Catalyzes the reversible conversion of 2-phosphoglycerate (2-PG) into phosphoenolpyruvate (PEP). It is essential for the degradation of carbohydrates via glycolysis. The chain is Enolase from Methylorubrum extorquens (strain PA1) (Methylobacterium extorquens).